A 359-amino-acid polypeptide reads, in one-letter code: 3-dehydroquinate synthase (359 aa).

NAD(+) is bound by residues 69-74, 103-107, 127-128, lysine 140, lysine 149, and 167-170; these read DGEAYK, GVIGD, TT, and CLKT. Zn(2+) contacts are provided by glutamate 182, histidine 245, and histidine 262.

This sequence belongs to the sugar phosphate cyclases superfamily. Dehydroquinate synthase family. The cofactor is Co(2+). Zn(2+) serves as cofactor. Requires NAD(+) as cofactor.

The protein localises to the cytoplasm. The catalysed reaction is 7-phospho-2-dehydro-3-deoxy-D-arabino-heptonate = 3-dehydroquinate + phosphate. Its pathway is metabolic intermediate biosynthesis; chorismate biosynthesis; chorismate from D-erythrose 4-phosphate and phosphoenolpyruvate: step 2/7. Its function is as follows. Catalyzes the conversion of 3-deoxy-D-arabino-heptulosonate 7-phosphate (DAHP) to dehydroquinate (DHQ). The polypeptide is 3-dehydroquinate synthase (Aeromonas salmonicida (strain A449)).